The sequence spans 310 residues: ADP-L-glycero-D-manno-heptose-6-epimerase (310 aa).

Residues 10–11 (FI), 31–32 (DN), K38, K53, 75–79 (EGACS), and N92 each bind NADP(+). The active-site Proton acceptor is Y140. K144 provides a ligand contact to NADP(+). Residue N169 participates in substrate binding. Residues V170 and K178 each contribute to the NADP(+) site. K178 serves as the catalytic Proton acceptor. Substrate contacts are provided by residues S180, H187, 201 to 204 (FEGS), R209, and Y272.

The protein belongs to the NAD(P)-dependent epimerase/dehydratase family. HldD subfamily. In terms of assembly, homopentamer. Requires NADP(+) as cofactor.

It carries out the reaction ADP-D-glycero-beta-D-manno-heptose = ADP-L-glycero-beta-D-manno-heptose. The protein operates within nucleotide-sugar biosynthesis; ADP-L-glycero-beta-D-manno-heptose biosynthesis; ADP-L-glycero-beta-D-manno-heptose from D-glycero-beta-D-manno-heptose 7-phosphate: step 4/4. Functionally, catalyzes the interconversion between ADP-D-glycero-beta-D-manno-heptose and ADP-L-glycero-beta-D-manno-heptose via an epimerization at carbon 6 of the heptose. The chain is ADP-L-glycero-D-manno-heptose-6-epimerase from Salmonella paratyphi C (strain RKS4594).